Reading from the N-terminus, the 173-residue chain is Dual-action ribosomal maturation protein DarP (173 aa).

It belongs to the DarP family.

It localises to the cytoplasm. Functionally, member of a network of 50S ribosomal subunit biogenesis factors which assembles along the 30S-50S interface, preventing incorrect 23S rRNA structures from forming. Promotes peptidyl transferase center (PTC) maturation. The polypeptide is Dual-action ribosomal maturation protein DarP (Pseudomonas fluorescens (strain ATCC BAA-477 / NRRL B-23932 / Pf-5)).